Consider the following 345-residue polypeptide: S-adenosylmethionine:tRNA ribosyltransferase-isomerase (345 aa).

It belongs to the QueA family. Monomer.

The protein localises to the cytoplasm. The enzyme catalyses 7-aminomethyl-7-carbaguanosine(34) in tRNA + S-adenosyl-L-methionine = epoxyqueuosine(34) in tRNA + adenine + L-methionine + 2 H(+). Its pathway is tRNA modification; tRNA-queuosine biosynthesis. In terms of biological role, transfers and isomerizes the ribose moiety from AdoMet to the 7-aminomethyl group of 7-deazaguanine (preQ1-tRNA) to give epoxyqueuosine (oQ-tRNA). The polypeptide is S-adenosylmethionine:tRNA ribosyltransferase-isomerase (Helicobacter pylori (strain J99 / ATCC 700824) (Campylobacter pylori J99)).